Here is a 369-residue protein sequence, read N- to C-terminus: Tetraacyldisaccharide 4'-kinase (369 aa).

ATP is bound at residue 52–59 (TVGGTGKT).

Belongs to the LpxK family.

It catalyses the reaction a lipid A disaccharide + ATP = a lipid IVA + ADP + H(+). The protein operates within glycolipid biosynthesis; lipid IV(A) biosynthesis; lipid IV(A) from (3R)-3-hydroxytetradecanoyl-[acyl-carrier-protein] and UDP-N-acetyl-alpha-D-glucosamine: step 6/6. In terms of biological role, transfers the gamma-phosphate of ATP to the 4'-position of a tetraacyldisaccharide 1-phosphate intermediate (termed DS-1-P) to form tetraacyldisaccharide 1,4'-bis-phosphate (lipid IVA). The protein is Tetraacyldisaccharide 4'-kinase of Parabacteroides distasonis (strain ATCC 8503 / DSM 20701 / CIP 104284 / JCM 5825 / NCTC 11152).